We begin with the raw amino-acid sequence, 277 residues long: Collectin-10 (277 aa).

The signal sequence occupies residues 1–27; that stretch reads MSRKKEQQLRKYGTLVVLFIFQVQIFG. Positions 41–82 are disordered; it reads THTILPGPKGDDGEKGDRGEVGKQGKVGPKGPKGNKGTVGDV. Residues 49–63 are compositionally biased toward basic and acidic residues; the sequence is KGDDGEKGDRGEVGK. Residues 56-115 form the Collagen-like domain; the sequence is GDRGEVGKQGKVGPKGPKGNKGTVGDVGDQGMLGKIGPIGGKGDKGAKGISGVSGKKGKA. Low complexity predominate over residues 64-79; sequence QGKVGPKGPKGNKGTV. In terms of domain architecture, C-type lectin spans 155–271; that stretch reads TDEKFYYIVK…CQVTIYFICE (117 aa). Intrachain disulfides connect Cys-176–Cys-270 and Cys-248–Cys-262. The N-linked (GlcNAc...) asparagine glycan is linked to Asn-258.

The protein belongs to the COLEC10/COLEC11 family. As to expression, widely expressed. Highly expressed in lung. Weakly expressed in larynx, syrinx and cranial air sac. Expressed throughout the lower gastrointestinal tract in increasing levels starting from a faint signal in duodenum and ending with relatively high signals in proctodeum, coprodeum and urodeum. In the upper part of the gastrointestinal tract, expressed in tongue, crop, and mucosa of the crop.

The protein localises to the secreted. The protein resides in the golgi apparatus. It localises to the cytoplasm. Lectin that binds to various sugars: galactose &gt; mannose = fucose &gt; N-acetylglucosamine &gt; N-acetylgalactosamine. Acts as a chemoattractant, probably involved in the regulation of cell migration. The sequence is that of Collectin-10 (COLEC10) from Gallus gallus (Chicken).